A 1052-amino-acid polypeptide reads, in one-letter code: Eukaryotic translation initiation factor 3 subunit A (1052 aa).

Positions 92 to 121 (LKKFIELAEKKVTEAQAKADEIQSSLESAA) form a coiled coil. Residues 339-523 (MTKAASFVLL…GVLTFDTDVF (185 aa)) form the PCI domain. Residues 580-906 (EARLQAKRAA…AEARRAARRT (327 aa)) adopt a coiled-coil conformation. Basic and acidic residues-rich tracts occupy residues 617 to 632 (AATDALQRKQREEETR) and 794 to 901 (KEVS…EARR). Disordered regions lie at residues 617-646 (AATDALQRKQREEETRKRIRTQQLQEAEKQ) and 794-1052 (KEVS…QGGQ). Composition is skewed to low complexity over residues 905 to 927 (RTGGAEPEAAPERAAPTERTAPR) and 948 to 964 (KEAAGGTPAAPAAAAPE). Residues 1013–1028 (GSSQPPSRTQTPGSSS) show a composition bias toward polar residues.

The protein belongs to the eIF-3 subunit A family. In terms of assembly, component of the eukaryotic translation initiation factor 3 (eIF-3) complex.

It localises to the cytoplasm. In terms of biological role, RNA-binding component of the eukaryotic translation initiation factor 3 (eIF-3) complex, which is involved in protein synthesis of a specialized repertoire of mRNAs and, together with other initiation factors, stimulates binding of mRNA and methionyl-tRNAi to the 40S ribosome. The eIF-3 complex specifically targets and initiates translation of a subset of mRNAs involved in cell proliferation. The polypeptide is Eukaryotic translation initiation factor 3 subunit A (tif32) (Aspergillus niger (strain ATCC MYA-4892 / CBS 513.88 / FGSC A1513)).